The sequence spans 51 residues: Small, acid-soluble spore protein K (51 aa).

The tract at residues 1 to 51 (MRNKAKGFPNPISFNGNKANNADEHASKRPDGTTRDRPQERMRSSNHFNSL) is disordered. The span at 21–43 (NADEHASKRPDGTTRDRPQERMR) shows a compositional bias: basic and acidic residues.

This sequence belongs to the SspK family.

The protein resides in the spore core. The sequence is that of Small, acid-soluble spore protein K from Shouchella clausii (strain KSM-K16) (Alkalihalobacillus clausii).